Consider the following 60-residue polypeptide: Ixodegrin-Ip (60 aa).

Residues 1 to 21 (MNAAFIAALFILGALTLDAMA) form the signal peptide. The short motif at 49 to 51 (RGD) is the Cell attachment site element.

It belongs to the ixodegrin family. Contains 3 disulfide bonds. Expressed in salivary glands.

The protein localises to the secreted. In terms of biological role, tick salivary platelet aggregation inhibitor that plays an important part in the anti-hemostatic strategy of ticks. Inhibits platelet aggregation induced by ADP, thrombin and thromboxane A2 (TXA2). Blocks platelet adhesion to soluble collagen (most probably through the binding to alpha-2/beta-1 integrin (ITGA2/ITGB1)) and binds to purified glycoprotein IIb/IIIa (ITGA2B/ITGB3) in a dose-dependent manner. In vivo, reduces thrombus weight effectively in a rat arteriovenous shunt model and inhibits thrombosis in a carrageenan-induced mouse tail thrombosis model. This chain is Ixodegrin-Ip, found in Ixodes pacificus (Western black-legged tick).